A 473-amino-acid chain; its full sequence is Arginine biosynthesis bifunctional protein ArgJ, mitochondrial (473 aa).

The substrate site is built by T201, K230, T241, E328, N468, and T473. T241 acts as the Nucleophile in catalysis.

Belongs to the ArgJ family. In terms of assembly, heterodimer of an alpha and a beta chain. Post-translationally, the alpha and beta chains are autoproteolytically processed from a single precursor protein within the mitochondrion.

The protein localises to the mitochondrion matrix. The catalysed reaction is N(2)-acetyl-L-ornithine + L-glutamate = N-acetyl-L-glutamate + L-ornithine. It catalyses the reaction L-glutamate + acetyl-CoA = N-acetyl-L-glutamate + CoA + H(+). Its pathway is amino-acid biosynthesis; L-arginine biosynthesis; L-ornithine and N-acetyl-L-glutamate from L-glutamate and N(2)-acetyl-L-ornithine (cyclic): step 1/1. It functions in the pathway amino-acid biosynthesis; L-arginine biosynthesis; N(2)-acetyl-L-ornithine from L-glutamate: step 1/4. In terms of biological role, catalyzes two activities which are involved in the cyclic version of arginine biosynthesis: the synthesis of acetylglutamate from glutamate and acetyl-CoA, and of ornithine by transacetylation between acetylornithine and glutamate. This chain is Arginine biosynthesis bifunctional protein ArgJ, mitochondrial, found in Paracoccidioides brasiliensis (strain Pb18).